Reading from the N-terminus, the 530-residue chain is 4,4'-diapolycopene aldehyde oxidase (530 aa).

Residues Glu234 and Cys268 contribute to the active site.

The protein belongs to the aldehyde dehydrogenase family.

The enzyme catalyses all-trans-4,4'-diapolycopen-4-al + A + H2O = all-trans-4,4'-diapolycopen-4-oate + AH2 + H(+). It catalyses the reaction all-trans-4,4'-diapolycopene-4,4'-dial + 2 A + 2 H2O = all-trans-4,4'-diapolycopene-4,4'-dioate + 2 AH2 + 2 H(+). It participates in carotenoid biosynthesis. Involved in the biosynthesis of C30 carotenoids. Catalyzes the oxidation of 4,4'-diapolycopene-4,4'-dial to yield 4,4'-diapolycopene-4,4'-dioic acid. Also able to catalyze the oxidation of 4,4'-diapolycopen-4-al to yield 4,4'-diapolycopen-4-oic acid. The polypeptide is 4,4'-diapolycopene aldehyde oxidase (Methylomonas sp).